A 637-amino-acid chain; its full sequence is MVGSKMAASIRERQTVALKRMLNFNVPHVKNSPGEPVWKVLIYDRFGQDIISPLLSVKELRDMGITLHLLLHSDRDPIRDVPAVYFVMPTEENIDRLCQDLRNQLYESYYLNFISAISRSKLEDIANAALAANAVTQVAKVFDQYLNFITLEEDMFVLCNQNKELVSYRAINRPDITDTEMETVMDTIVDSLFCFFVTLGAVPIIRCSRGTAAEMVAVKLDKKLRENLRDARNSLFTGDPLGTGQFSFQRPLLVLVDRNIDLATPLHHTWTYQALVHDVLDFHLNRVNLEESTGVENSPTGARPKRKNKKSYDLTPVDKFWQKHKGSPFPEVAESVQQELESYRAQEDEVKRLKSIMGLEGEDEGAISMLSDNTAKLTSAVSSLPELLEKKRLIDLHTNVATAVLEHIKARKLDVYFEYEEKIMSKTTLDKSLLDVISDPDAGTPEDKMRLFLIYYISAQQAPSEVDLEQYKKALTDAGCNLSPLQYIKQWKAFAKMASTPASYGNTTTKPMGLLSRVMNTGSQFVMEGVKNLVLKQQNLPVTRILDNLMEMKSNPETDDYRYFDPKMLRSNDSSVPRNKSPFQEAIVFVVGGGNYIEYQNLVDYIKGKQGKHILYGCSEIFNATQFIKQLSQLGQK.

Phosphoserine occurs at positions 32, 298, and 523.

The protein belongs to the STXBP/unc-18/SEC1 family. As to quaternary structure, interacts with STX17. Interacts with the COG complex via COG4. Interacts with STX5A. In terms of tissue distribution, highly expressed in testis. Detected at lower levels in brain, astrocytes, heart and small intestine.

It is found in the cytoplasm. The protein localises to the endoplasmic reticulum membrane. It localises to the golgi apparatus. The protein resides in the golgi stack membrane. Functionally, plays a role in SNARE-pin assembly and Golgi-to-ER retrograde transport via its interaction with COG4. Involved in vesicular transport between the endoplasmic reticulum and the Golgi. The chain is Sec1 family domain-containing protein 1 (Scfd1) from Rattus norvegicus (Rat).